A 312-amino-acid polypeptide reads, in one-letter code: Ribonuclease Z (312 aa).

Positions 62, 64, 66, 67, 139, 210, and 268 each coordinate Zn(2+). Aspartate 66 (proton acceptor) is an active-site residue.

It belongs to the RNase Z family. Homodimer. Zn(2+) serves as cofactor.

The catalysed reaction is Endonucleolytic cleavage of RNA, removing extra 3' nucleotides from tRNA precursor, generating 3' termini of tRNAs. A 3'-hydroxy group is left at the tRNA terminus and a 5'-phosphoryl group is left at the trailer molecule.. Its function is as follows. Zinc phosphodiesterase, which displays some tRNA 3'-processing endonuclease activity. Probably involved in tRNA maturation, by removing a 3'-trailer from precursor tRNA. The protein is Ribonuclease Z of Crocosphaera subtropica (strain ATCC 51142 / BH68) (Cyanothece sp. (strain ATCC 51142)).